A 382-amino-acid chain; its full sequence is MSTYTRPVMLLLCGLLLLTLAIAVLNTLVPLWLAQANLPTWQVGMVSSSYFTGNLVGTLFTGYLIKRIGFNRSYYLASLIFAAGCVGLGGMVGFWSWMSWRFIAGIGCAMIWVVVESALMCSGTSHNRGRLLAAYMMAYYMGTFLGQLLVSKVSGELLHVLPWVTGMILAGILPLLFTRIVNQQTQARHSSSISAMLKLRQARLGVNGCIISGIVLGSLYGLMPLYLKHQGMANASIGFWMAVLVSAGILGQWPMGRLADKFGRLLVLRVQVFVVILGSIAMLTQAAMAPALFILGAAGFTLYPVAMAWACEKVEHHQLVAMNQALLLSYTVGSLLGPSFAAMLMQNYSDNLLFIMIASVSFIYLLMLLRNAGQTPNPVAHI.

Transmembrane regions (helical) follow at residues valine 8–leucine 28, methionine 45–isoleucine 65, tyrosine 75–tryptophan 95, phenylalanine 102–serine 122, leucine 131–serine 151, leucine 157–phenylalanine 177, leucine 204–proline 224, glycine 231–glycine 251, valine 270–proline 290, alanine 291–cysteine 311, alanine 325–methionine 345, and serine 349–leucine 369.

This sequence belongs to the major facilitator superfamily. YcaD (TC 2.A.1.26) family.

It is found in the cell inner membrane. This is an uncharacterized protein from Salmonella dublin (strain CT_02021853).